The sequence spans 723 residues: METAMCVCSPCCTWQRCCPRLFSCLCCKFIFTSERNCTCFPCPYKDERNCQFCHCTCAENPNCHWCCCSWANDPNCKCCCTASTNLKCYYYESHCCRNVTITFRKGRLRSIVTSSKTALRVGSSDTQMDEPKTMPASSHLVSHLTCPMCNRLRLHSFMLPCNHSLCEKCLRQLQKHAEVTENFFILICPMCSRSHCMPYSHQMHLPENYLRGRLTKRYMQQHGYLKWRFDRSSGPILCQVCRTRRIAYKRCVTCRLNLCNDCLKAFHSDVAMQDHVFVDTSAEDQDEKICIHHPSSRINEYCRSDNQLLCAFCKIAFHNGHDTVSLIDACSERSAALFSAIAKFKAVRYEIDNDLMEFNILKSSFKADKEAKRKEVRNGFLKLRAILQEKEKIIMEQIENLEVSRQKEIEKYVYITTMKVNEMDGLIAYSKEALKETGQVAFLQSAKILVDQIEEGIQNTFRPDPQLRLHSLHCIPLDFAELSNAIHELFPTGPKKACSSGDSLPSQYPIHSEMMIARKVTFSTHSFGNQQIYQRSSSLISFNTANDKGKMGLENYGRAQSAAPAKTTDGLYTYWSATGETQPPQSSNSFHNWYSFNDTSVRTPGPIVIYQTLVYPRAAKVYWTCPTEDVDSFEMEFYELVTTPPNNVRTELCGQIRDILQQNLELHNLTPNTEYLFKVRAINDNGPGQWSDICKVVTPDGRGKNRAKWGLLKNIQSALQKRF.

The segment at C146–S192 adopts an RING-type zinc-finger fold. B box-type zinc fingers lie at residues P235 to T280 and Q285 to L326. C290, H293, C313, and H318 together coordinate Zn(2+). Positions K382 to Y412 form a coiled coil. The 59-residue stretch at L434–T492 folds into the COS domain. The Fibronectin type-III domain occupies T603–G701.

The protein belongs to the TRIM/RBCC family.

This chain is Tripartite motif-containing protein 42 (Trim42), found in Mus musculus (Mouse).